The chain runs to 825 residues: BEN domain-containing protein 3 (825 aa).

Over residues 1–11 (MNSTEISEDVE) the composition is skewed to acidic residues. A disordered region spans residues 1 to 35 (MNSTEISEDVEEVLKNNPVKAEGSDATLDCSRNSR). Lys-20 participates in a covalent cross-link: Glycyl lysine isopeptide (Lys-Gly) (interchain with G-Cter in SUMO); alternate. Residue Lys-20 forms a Glycyl lysine isopeptide (Lys-Gly) (interchain with G-Cter in SUMO1); alternate linkage. Lys-20 participates in a covalent cross-link: Glycyl lysine isopeptide (Lys-Gly) (interchain with G-Cter in SUMO2); alternate. Glycyl lysine isopeptide (Lys-Gly) (interchain with G-Cter in SUMO2) cross-links involve residues Lys-39, Lys-54, Lys-56, Lys-71, Lys-126, Lys-127, Lys-135, Lys-140, Lys-156, and Lys-174. The disordered stretch occupies residues 52–122 (SSKRKQLDSD…EEEPSTEATV (71 aa)). Residues 54–56 (KRK) carry the Nuclear localization signal motif. The region spanning 239–340 (PPPEYQLTAS…DFFSRFWAQR (102 aa)) is the BEN 1 domain. The residue at position 376 (Ser-376) is a Phosphoserine. Positions 384–484 (ASDHVVDTQD…DELEGLGLEG (101 aa)) constitute a BEN 2 domain. Lys-424 is covalently cross-linked (Glycyl lysine isopeptide (Lys-Gly) (interchain with G-Cter in SUMO2)). Ser-486 is subject to Phosphoserine. Lys-509 participates in a covalent cross-link: Glycyl lysine isopeptide (Lys-Gly) (interchain with G-Cter in SUMO); alternate. A Glycyl lysine isopeptide (Lys-Gly) (interchain with G-Cter in SUMO2); alternate cross-link involves residue Lys-509. Lys-525 is covalently cross-linked (Glycyl lysine isopeptide (Lys-Gly) (interchain with G-Cter in SUMO2)). The BEN 3 domain maps to 547 to 647 (GSDCLLSKEQ…ERCRRRDTEQ (101 aa)). Residue Lys-697 forms a Glycyl lysine isopeptide (Lys-Gly) (interchain with G-Cter in SUMO2) linkage. One can recognise a BEN 4 domain in the interval 712 to 813 (VPSPYLLSDK…ERCRRPNRKK (102 aa)).

Homooligomer, probably a homooctamer. Interacts with HDAC2 and HDAC3, but not HDAC1. Interacts with SALL4. Interacts with SMARCA5/SNF2H, BAZ2A/TIP5 and USP21. Interacts with the nucleosome remodeling and histone deacetylase (NuRD) repressor complex. Interacts (via BEN domains 1 and 3) with ERCC6L (via N-terminal TPR repeat); the interaction is direct. In terms of processing, sumoylated at Lys-20 by SUMO1 and at Lys-509 by SUMO1, SUMO2 and SUMO3. Sumoylation probably occurs sequentially, with that of Lys-20 preceding that of Lys-509. It does not alter association with heterochromatin, but is required for the repression of transcription.

The protein localises to the nucleus. Its subcellular location is the nucleolus. In terms of biological role, transcriptional repressor which associates with the NoRC (nucleolar remodeling complex) complex and plays a key role in repressing rDNA transcription. The sumoylated form modulates the stability of the NoRC complex component BAZ2A/TIP5 by controlling its USP21-mediated deubiquitination. Binds to unmethylated major satellite DNA and is involved in the recruitment of the Polycomb repressive complex 2 (PRC2) to major satellites. Stimulates the ERCC6L translocase and ATPase activities. The protein is BEN domain-containing protein 3 (Bend3) of Mus musculus (Mouse).